A 593-amino-acid polypeptide reads, in one-letter code: MSDPCWEQCVSCLQNELPSQQFNTWIRPLRVEESSTLLLRLIAPNRFVQDWVNDKYRTRIEEIISNSDAGPKSLEIAVAQRARAGFEVVRNAKVAPAVPVPDPLPSTGRDESSFQPPKGNTSADYSGHSDLGFQSPHRRQSPFSESQERFTQPLEMSRFGSGRPSNERSNEGAIGGSTESSADRERIPLQGVVEDLFKPTKNSNDFVEPRSTDPLLEIESRPIIETVSPRDIQDFGSQLTSRVKKKDVEGGIQHKHNLNTTFIFDNFVVGKSNQLGLAAASQVAENPGGAYNPLFIYGGVGLGKTHLMHAVGNALVQRKPGARVVYLHSERFVADMVKALQLNAISDFKRFYRSVDALLIDDIQFFAGKERSQEEFFHTFNALLEGGQQIILTCDKYPKEINGLEERLKSRFGWGLTVAIEPPELETRVAILKRKAESSRMPLPDDAAFFIAQRIRSNVRELEGALKRVIANAQFTQRSISVELVREALKDLLALQDRLVSIDNIQRVVAEYYKIKVSDLHSKRRSRSVARPRQVAMYLAKDLTHHSLPEIGDAFGGRDHTTVLHACRKIRDLQESDADIREDVKNLLRTLTT.

The interval 1–71 is domain I, interacts with DnaA modulators; the sequence is MSDPCWEQCV…EIISNSDAGP (71 aa). Positions 71 to 256 are domain II; that stretch reads PKSLEIAVAQ…DVEGGIQHKH (186 aa). The tract at residues 97-186 is disordered; the sequence is AVPVPDPLPS…STESSADRER (90 aa). Positions 113-124 are enriched in polar residues; sequence SFQPPKGNTSAD. Residues 257 to 473 are domain III, AAA+ region; that stretch reads NLNTTFIFDN…GALKRVIANA (217 aa). Residues G301, G303, K304, and T305 each contribute to the ATP site. Residues 474–593 form a domain IV, binds dsDNA region; that stretch reads QFTQRSISVE…VKNLLRTLTT (120 aa).

The protein belongs to the DnaA family. In terms of assembly, oligomerizes as a right-handed, spiral filament on DNA at oriC.

Its subcellular location is the cytoplasm. Its function is as follows. Plays an essential role in the initiation and regulation of chromosomal replication. ATP-DnaA binds to the origin of replication (oriC) to initiate formation of the DNA replication initiation complex once per cell cycle. Binds the DnaA box (a 9 base pair repeat at the origin) and separates the double-stranded (ds)DNA. Forms a right-handed helical filament on oriC DNA; dsDNA binds to the exterior of the filament while single-stranded (ss)DNA is stabiized in the filament's interior. The ATP-DnaA-oriC complex binds and stabilizes one strand of the AT-rich DNA unwinding element (DUE), permitting loading of DNA polymerase. After initiation quickly degrades to an ADP-DnaA complex that is not apt for DNA replication. Binds acidic phospholipids. The protein is Chromosomal replication initiator protein DnaA of Teredinibacter turnerae (strain ATCC 39867 / T7901).